Here is a 361-residue protein sequence, read N- to C-terminus: Large-conductance mechanosensitive channel MscMJLR (361 aa).

Helical transmembrane passes span Ile20 to Ile40, Leu65 to Leu85, Leu89 to Phe109, Ile137 to Ile157, and Leu177 to Leu197.

Belongs to the MscS (TC 1.A.23) family.

The protein resides in the cell membrane. Its function is as follows. Large-conductance mechanosensitive channel that opens in response to stretch forces in the membrane lipid bilayer. Selective for cations. Rectifies with voltage. The chain is Large-conductance mechanosensitive channel MscMJLR from Methanocaldococcus jannaschii (strain ATCC 43067 / DSM 2661 / JAL-1 / JCM 10045 / NBRC 100440) (Methanococcus jannaschii).